The chain runs to 145 residues: Cytochrome b (145 aa).

The helical transmembrane segment at 38-58 threads the bilayer; sequence FFALHFLLPFVLAALVIMHLI. Heme b contacts are provided by His42 and His56. His61 is a binding site for a ubiquinone. Residues 85 to 105 form a helical membrane-spanning segment; sequence FVFKDLVTVFIFFIVLSVFVF.

Belongs to the cytochrome b family. As to quaternary structure, fungal cytochrome b-c1 complex contains 10 subunits; 3 respiratory subunits, 2 core proteins and 5 low-molecular weight proteins. Cytochrome b-c1 complex is a homodimer. It depends on heme b as a cofactor.

The protein resides in the mitochondrion inner membrane. Component of the ubiquinol-cytochrome c reductase complex (complex III or cytochrome b-c1 complex) that is part of the mitochondrial respiratory chain. The b-c1 complex mediates electron transfer from ubiquinol to cytochrome c. Contributes to the generation of a proton gradient across the mitochondrial membrane that is then used for ATP synthesis. The chain is Cytochrome b (cob) from Aspergillus fumigatus (Neosartorya fumigata).